Reading from the N-terminus, the 86-residue chain is Small ribosomal subunit protein uS17 (86 aa).

It belongs to the universal ribosomal protein uS17 family. In terms of assembly, part of the 30S ribosomal subunit.

One of the primary rRNA binding proteins, it binds specifically to the 5'-end of 16S ribosomal RNA. This chain is Small ribosomal subunit protein uS17, found in Streptococcus gordonii (strain Challis / ATCC 35105 / BCRC 15272 / CH1 / DL1 / V288).